Reading from the N-terminus, the 338-residue chain is tRNA N6-adenosine threonylcarbamoyltransferase (338 aa).

Histidine 111 and histidine 115 together coordinate Fe cation. Residues 134–138 (LLSGG), aspartate 167, glycine 180, and asparagine 275 contribute to the substrate site. Aspartate 304 is a Fe cation binding site.

It belongs to the KAE1 / TsaD family. It depends on Fe(2+) as a cofactor.

It is found in the cytoplasm. The catalysed reaction is L-threonylcarbamoyladenylate + adenosine(37) in tRNA = N(6)-L-threonylcarbamoyladenosine(37) in tRNA + AMP + H(+). In terms of biological role, required for the formation of a threonylcarbamoyl group on adenosine at position 37 (t(6)A37) in tRNAs that read codons beginning with adenine. Is involved in the transfer of the threonylcarbamoyl moiety of threonylcarbamoyl-AMP (TC-AMP) to the N6 group of A37, together with TsaE and TsaB. TsaD likely plays a direct catalytic role in this reaction. This Leptospira borgpetersenii serovar Hardjo-bovis (strain JB197) protein is tRNA N6-adenosine threonylcarbamoyltransferase.